The primary structure comprises 300 residues: tRNA-cytidine(32) 2-sulfurtransferase (300 aa).

The short motif at 57–62 (SGGKDS) is the PP-loop motif element. [4Fe-4S] cluster is bound by residues cysteine 132, cysteine 135, and cysteine 223.

Belongs to the TtcA family. Homodimer. The cofactor is Mg(2+). Requires [4Fe-4S] cluster as cofactor.

The protein resides in the cytoplasm. It catalyses the reaction cytidine(32) in tRNA + S-sulfanyl-L-cysteinyl-[cysteine desulfurase] + AH2 + ATP = 2-thiocytidine(32) in tRNA + L-cysteinyl-[cysteine desulfurase] + A + AMP + diphosphate + H(+). The protein operates within tRNA modification. Functionally, catalyzes the ATP-dependent 2-thiolation of cytidine in position 32 of tRNA, to form 2-thiocytidine (s(2)C32). The sulfur atoms are provided by the cysteine/cysteine desulfurase (IscS) system. In Xanthomonas campestris pv. campestris (strain 8004), this protein is tRNA-cytidine(32) 2-sulfurtransferase.